A 390-amino-acid chain; its full sequence is Fer-related kinase 1 (390 aa).

Positions 23 to 119 constitute an SH2 domain; that stretch reads YYHGMVPRQD…ASGAKIRRPM (97 aa). Positions 131-386 constitute a Protein kinase domain; sequence IVANKKLGEG…SIHKKLREFY (256 aa). Residues 137-145 and Lys-161 each bind ATP; that span reads LGEGAFGDV. Asp-252 functions as the Proton acceptor in the catalytic mechanism.

The protein belongs to the protein kinase superfamily. Tyr protein kinase family. Fes/fps subfamily. In terms of assembly, interacts with hmp-2. It depends on Mn(2+) as a cofactor.

It is found in the nucleus. It localises to the cytoplasm. The protein resides in the cell junction. Its subcellular location is the cell membrane. It catalyses the reaction L-tyrosyl-[protein] + ATP = O-phospho-L-tyrosyl-[protein] + ADP + H(+). Non-receptor tyrosine-protein kinase which plays a role in morphogenesis by regulating the epidermal enclosure of the embryo, independently of its kinase activity. Prevents hyperactivation of the Wnt signaling pathway during endoderm development, probably by preventing hmp-2 nuclear translocation. The protein is Fer-related kinase 1 of Caenorhabditis elegans.